The primary structure comprises 255 residues: Myogenic factor 5 (255 aa).

One can recognise a bHLH domain in the interval 83–134 (DRRKAATMRERRRLKKVNQAFETLKRCTTTNPNQRLPKVEILRNAIQYIESL). Low complexity predominate over residues 221–242 (SLPIPDSITPSPTSSTDSLPRS). A disordered region spans residues 221 to 246 (SLPIPDSITPSPTSSTDSLPRSPDAH).

In terms of assembly, efficient DNA binding requires dimerization with another bHLH protein.

The protein resides in the nucleus. In terms of biological role, acts as a transcriptional activator that promotes transcription of muscle-specific target genes and plays a role in muscle differentiation. Induces fibroblasts to differentiate into myoblasts. Probable sequence specific DNA-binding protein. The chain is Myogenic factor 5 (myf5) from Xenopus laevis (African clawed frog).